We begin with the raw amino-acid sequence, 570 residues long: Dual specificity testis-specific protein kinase 2 (570 aa).

Positions 58–313 (DFTREKIGSG…EIGKTLKEIM (256 aa)) constitute a Protein kinase domain. ATP-binding positions include 64 to 72 (IGSGFFSEV) and Lys-87. Asp-176 acts as the Proton acceptor in catalysis. Ser-219 is modified (phosphoserine; by autocatalysis). A compositionally biased stretch (basic and acidic residues) spans 316–327 (LPEEELERDRKL). The segment at 316 to 357 (LPEEELERDRKLQPTAKGPLEKVPGGKRLSSLDDKIPHKSPR) is disordered. Residues Ser-369, Ser-456, and Ser-460 each carry the phosphoserine modification. A disordered region spans residues 511-530 (AMDCSNPQEENGFGPRLKGT).

It belongs to the protein kinase superfamily. TKL Ser/Thr protein kinase family. It depends on Mg(2+) as a cofactor. Mn(2+) is required as a cofactor.

It localises to the nucleus. It carries out the reaction L-seryl-[protein] + ATP = O-phospho-L-seryl-[protein] + ADP + H(+). The catalysed reaction is L-threonyl-[protein] + ATP = O-phospho-L-threonyl-[protein] + ADP + H(+). It catalyses the reaction L-tyrosyl-[protein] + ATP = O-phospho-L-tyrosyl-[protein] + ADP + H(+). Activated by autophosphorylation on Ser-219. Functionally, dual specificity protein kinase activity catalyzing autophosphorylation and phosphorylation of exogenous substrates on both serine/threonine and tyrosine residues. Phosphorylates cofilin at 'Ser-3'. May play an important role in spermatogenesis. This is Dual specificity testis-specific protein kinase 2 (Tesk2) from Mus musculus (Mouse).